The sequence spans 302 residues: Uroporphyrinogen-III synthase, chloroplastic (302 aa).

The disordered stretch occupies residues 1–39 (MALSSSSHLLPFSRPPATFPRARHAGGGRGRAGATGRFI). The N-terminal 50 residues, 1–50 (MALSSSSHLLPFSRPPATFPRARHAGGGRGRAGATGRFIACSSPPPPDVV), are a transit peptide targeting the chloroplast.

This sequence belongs to the uroporphyrinogen-III synthase family.

The protein localises to the plastid. It is found in the chloroplast. It catalyses the reaction hydroxymethylbilane = uroporphyrinogen III + H2O. It functions in the pathway porphyrin-containing compound metabolism; protoporphyrin-IX biosynthesis; coproporphyrinogen-III from 5-aminolevulinate: step 3/4. Its function is as follows. Catalyzes cyclization of the linear tetrapyrrole, hydroxymethylbilane, to the macrocyclic uroporphyrinogen III, a precursor of tetrapyrroles such as chlorophyll, heme and phycobilins. This is Uroporphyrinogen-III synthase, chloroplastic (UROS) from Oryza sativa subsp. japonica (Rice).